We begin with the raw amino-acid sequence, 382 residues long: Nitric oxide reductase FlRd-NAD(+) reductase (382 aa).

The protein belongs to the FAD-dependent oxidoreductase family. The cofactor is FAD.

Its subcellular location is the cytoplasm. The enzyme catalyses 2 reduced [nitric oxide reductase rubredoxin domain] + NAD(+) + H(+) = 2 oxidized [nitric oxide reductase rubredoxin domain] + NADH. It functions in the pathway nitrogen metabolism; nitric oxide reduction. Functionally, one of at least two accessory proteins for anaerobic nitric oxide (NO) reductase. Reduces the rubredoxin moiety of NO reductase. The protein is Nitric oxide reductase FlRd-NAD(+) reductase of Vibrio vulnificus (strain YJ016).